The chain runs to 346 residues: Tetraacyldisaccharide 4'-kinase (346 aa).

Residue 54-61 participates in ATP binding; the sequence is TVGGAGKT.

This sequence belongs to the LpxK family.

The enzyme catalyses a lipid A disaccharide + ATP = a lipid IVA + ADP + H(+). It participates in glycolipid biosynthesis; lipid IV(A) biosynthesis; lipid IV(A) from (3R)-3-hydroxytetradecanoyl-[acyl-carrier-protein] and UDP-N-acetyl-alpha-D-glucosamine: step 6/6. In terms of biological role, transfers the gamma-phosphate of ATP to the 4'-position of a tetraacyldisaccharide 1-phosphate intermediate (termed DS-1-P) to form tetraacyldisaccharide 1,4'-bis-phosphate (lipid IVA). The polypeptide is Tetraacyldisaccharide 4'-kinase (Rhizobium etli (strain ATCC 51251 / DSM 11541 / JCM 21823 / NBRC 15573 / CFN 42)).